The sequence spans 247 residues: Sugar fermentation stimulation protein homolog (247 aa).

This sequence belongs to the SfsA family.

The chain is Sugar fermentation stimulation protein homolog from Aeromonas salmonicida (strain A449).